The chain runs to 456 residues: Phosphomannomutase (456 aa).

The Phosphoserine intermediate role is filled by Ser98. Mg(2+) contacts are provided by Ser98, Asp245, Asp247, and Asp249.

This sequence belongs to the phosphohexose mutase family. The cofactor is Mg(2+).

The enzyme catalyses alpha-D-mannose 1-phosphate = D-mannose 6-phosphate. Its pathway is nucleotide-sugar biosynthesis; GDP-alpha-D-mannose biosynthesis; alpha-D-mannose 1-phosphate from D-fructose 6-phosphate: step 2/2. In terms of biological role, involved in the biosynthesis of the capsular polysaccharide colanic acid. In Escherichia coli (strain K12), this protein is Phosphomannomutase (manB).